The primary structure comprises 97 residues: MARKYEIMYIIRPNIEEDEKKAVVERFDGILTENGAEIIESKEWGKRRLAYEINDYRDGFYHIVKLNADKADSINEFDRLAKISDDIVRHMVIKEEA.

It belongs to the bacterial ribosomal protein bS6 family.

In terms of biological role, binds together with bS18 to 16S ribosomal RNA. This is Small ribosomal subunit protein bS6 from Listeria innocua serovar 6a (strain ATCC BAA-680 / CLIP 11262).